The chain runs to 400 residues: Egl nine homolog 1 (400 aa).

N-acetylalanine is present on Ala2. Positions 6 to 20 are required for nuclear export; it reads GGPGVLSASERDRQY. Ser12 is subject to Phosphoserine. Cys21, Cys24, Cys33, Cys36, Cys42, His46, His54, and Cys58 together coordinate Zn(2+). An MYND-type; atypical zinc finger spans residues 21 to 58; it reads CELCGKMENLLRCGRCRSSFYCCKEHQRQDWKKHKLVC. The span at 62 to 74 shows a compositional bias: low complexity; the sequence is EAPRAQPAPAQPR. The disordered stretch occupies residues 62–161; sequence EAPRAQPAPA…PGGGLRPNGQ (100 aa). Ser114 carries the post-translational modification Phosphoserine. Positions 142–157 are enriched in gly residues; the sequence is AGGGPGEALSPGGGLR. 2 positions are modified to S-nitrosocysteine: Cys178 and Cys185. A beta(2)beta(3) 'finger-like' loop region spans residues 218 to 228; the sequence is VSQKSDSSKDI. A Fe2OG dioxygenase domain is found at 271-369; sequence GRTKAMVACY…RYAITVWYFD (99 aa). Cys279 bears the S-nitrosocysteine mark. Positions 290 and 292 each coordinate Fe cation. Residues Cys300 and Cys303 each carry the S-nitrosocysteine modification. A Fe cation-binding site is contributed by His351. Arg360 lines the 2-oxoglutarate pocket.

In terms of assembly, monomer. Interacts with ING4; the interaction inhibits the hydroxylation of HIF alpha proteins. Interacts with PTGES3 (via PXLE motif); thereby recruiting EGLN1 to the HSP90 pathway to facilitate HIF alpha proteins hydroxylation. Interacts with LIMD1. Found in a complex composed of LIMD1, VHL, EGLN1/PHD2, ELOB and CUL2. Interacts with EPAS1. Interacts with CBFA2T3 and HIF1A. It depends on Fe(2+) as a cofactor. L-ascorbate is required as a cofactor. In terms of processing, S-nitrosylation inhibits the enzyme activity up to 60% under aerobic conditions. Chelation of Fe(2+) has no effect on the S-nitrosylation. It is uncertain whether nitrosylation occurs on Cys-300 or Cys-303. Expressed in heart, brain liver, skeletal muscle and kidney. Low levels were detected in the lung. Constitutively expressed during differentiation of C2C12 skeletal myocytes.

It localises to the cytoplasm. It is found in the nucleus. The catalysed reaction is L-prolyl-[hypoxia-inducible factor alpha subunit] + 2-oxoglutarate + O2 = trans-4-hydroxy-L-prolyl-[hypoxia-inducible factor alpha subunit] + succinate + CO2. Its function is as follows. Cellular oxygen sensor that catalyzes, under normoxic conditions, the post-translational formation of 4-hydroxyproline in hypoxia-inducible factor (HIF) alpha proteins. Hydroxylates a specific proline found in each of the oxygen-dependent degradation (ODD) domains (N-terminal, NODD, and C-terminal, CODD) of HIF1A. Also hydroxylates HIF2A. Has a preference for the CODD site for both HIF1A and HIF1B. Hydroxylated HIFs are then targeted for proteasomal degradation via the von Hippel-Lindau ubiquitination complex. Under hypoxic conditions, the hydroxylation reaction is attenuated allowing HIFs to escape degradation resulting in their translocation to the nucleus, heterodimerization with HIF1B, and increased expression of hypoxy-inducible genes. EGLN1 is the most important isozyme under normoxia and, through regulating the stability of HIF1, involved in various hypoxia-influenced processes such as angiogenesis in retinal and cardiac functionality. Target proteins are preferentially recognized via a LXXLAP motif. The chain is Egl nine homolog 1 (Egln1) from Mus musculus (Mouse).